A 166-amino-acid polypeptide reads, in one-letter code: Protein-export protein SecB (166 aa).

The span at 1–16 (MTDTSAAGNPTPGQQP) shows a compositional bias: polar residues. A disordered region spans residues 1–21 (MTDTSAAGNPTPGQQPANPPS).

This sequence belongs to the SecB family. As to quaternary structure, homotetramer, a dimer of dimers. One homotetramer interacts with 1 SecA dimer.

The protein localises to the cytoplasm. Its function is as follows. One of the proteins required for the normal export of preproteins out of the cell cytoplasm. It is a molecular chaperone that binds to a subset of precursor proteins, maintaining them in a translocation-competent state. It also specifically binds to its receptor SecA. This Hyphomonas neptunium (strain ATCC 15444) protein is Protein-export protein SecB.